The chain runs to 465 residues: Chaperone protein dnaJ C76, chloroplastic (465 aa).

The transit peptide at 1-38 (MTPAIFSPTTLPPSTATWPCSTSQKLITVRSPLKFKCR) directs the protein to the chloroplast. The J domain occupies 50 to 113 (DLYDLLGIDR…ISRQAYDKEQ (64 aa)). Residues 346-385 (AALPSSGNNNGSKASSNPQVTRKTFPSEEKPTSRRENRRQ) are disordered. Residues 350-362 (SSGNNNGSKASSN) are compositionally biased toward low complexity. Positions 370 to 384 (FPSEEKPTSRRENRR) are enriched in basic and acidic residues.

It belongs to the DnaJ family. As to expression, expressed in roots, exclusively in the stele.

It is found in the plastid. The protein resides in the chloroplast. In terms of biological role, may function together with HSC70 chaperone to assist protein folding and prevent protein aggregation during salt stress in the chloroplast. Involved in root development. Required for the position-dependent cell fate determination during root hair development. In Arabidopsis thaliana (Mouse-ear cress), this protein is Chaperone protein dnaJ C76, chloroplastic.